The primary structure comprises 542 residues: Probable protein kinase UbiB (542 aa).

Positions 123 to 505 (DFDEQALASA…ADNKTYNVKM (383 aa)) constitute a Protein kinase domain. ATP contacts are provided by residues 129–137 (LASASIAQV) and K156. The active-site Proton acceptor is D291. The helical transmembrane segment at 506 to 526 (IIMGSIILSLLWQFNSLPLWL) threads the bilayer.

This sequence belongs to the ABC1 family. UbiB subfamily.

The protein resides in the cell inner membrane. Its pathway is cofactor biosynthesis; ubiquinone biosynthesis [regulation]. Functionally, is probably a protein kinase regulator of UbiI activity which is involved in aerobic coenzyme Q (ubiquinone) biosynthesis. The polypeptide is Probable protein kinase UbiB (Haemophilus ducreyi (strain 35000HP / ATCC 700724)).